A 303-amino-acid chain; its full sequence is Hemolysin E, chromosomal (303 aa).

The cysteines at positions 87 and 285 are disulfide-linked. A helical membrane pass occupies residues 183–203 (AGVVAGPFGLIISYSIAAGVV).

As to quaternary structure, monomer and oligomer. In periplasm, it is present as a monomer, while in outer membrane vesicles, it oligomerizes to form a pore structure that is active. The pore is formed by a dodecamer. In periplasm, it forms a disulfide bond between Cys-87 and Cys-285, which prevents the oligomerization. In outer membrane vesicles, the redox status prevents formation of the disulfide bond, leading to oligomerization and pore formation.

The protein resides in the secreted. It is found in the periplasm. The protein localises to the host cell membrane. In terms of biological role, toxin, which has some hemolytic activity towards mammalian cells. Acts by forming a pore-like structure upon contact with mammalian cells. The chain is Hemolysin E, chromosomal (hlyE) from Escherichia coli (strain K12).